Here is a 328-residue protein sequence, read N- to C-terminus: MIERIWSGKSWLYLLLLPLSWLYGAITWLIRISYTLGLRSAWRAPVPVIIVGNLTAGGNGKTPVVIWLVEQLKQRGYRVGVVSRGYGGKSDVYPLLLSNSTTTSQAGDEPVLIYQRTAAPVAVSPKRSDAVKALLKSHDLDFIITDDGLQHYALQRDFELVVIDGVRRFGNGWWLPAGPMRERAGRLRSVDAVITNGGIAATGEIPMQLAAREAVNLVTGERCPAQQLQHVVAMAGIGHPPRFFATLNLLGIAPKKEYAFADHQDYSLAQLSSLTSGPQNLLMTEKDAVKCRVFAQPNWWYLPVDAQLPPDQAEQLLLKIQALSRCST.

Residue 55–62 (TAGGNGKT) participates in ATP binding.

This sequence belongs to the LpxK family.

It catalyses the reaction a lipid A disaccharide + ATP = a lipid IVA + ADP + H(+). The protein operates within glycolipid biosynthesis; lipid IV(A) biosynthesis; lipid IV(A) from (3R)-3-hydroxytetradecanoyl-[acyl-carrier-protein] and UDP-N-acetyl-alpha-D-glucosamine: step 6/6. In terms of biological role, transfers the gamma-phosphate of ATP to the 4'-position of a tetraacyldisaccharide 1-phosphate intermediate (termed DS-1-P) to form tetraacyldisaccharide 1,4'-bis-phosphate (lipid IVA). The protein is Tetraacyldisaccharide 4'-kinase of Yersinia enterocolitica serotype O:8 / biotype 1B (strain NCTC 13174 / 8081).